Reading from the N-terminus, the 91-residue chain is Potassium channel toxin Meg-beta-KTx1 (91 aa).

The first 19 residues, 1 to 19 (MQRNLVVLLFLGMVALSSC), serve as a signal peptide directing secretion. Positions 20–27 (GLREKHFQ) are excised as a propeptide. The 38-residue stretch at 54 to 91 (QFGCPAYQGYCDDHCQDIKKQEGFCHGFKCKCGIPMGF) folds into the BetaSPN-type CS-alpha/beta domain. Disulfide bonds link Cys57–Cys78, Cys64–Cys83, and Cys68–Cys85.

The protein belongs to the long chain scorpion toxin family. Class 1 subfamily. In terms of tissue distribution, expressed by the venom gland.

Its subcellular location is the secreted. Its function is as follows. Inhibits voltage-gated potassium channel. This Mesobuthus gibbosus (Mediterranean checkered scorpion) protein is Potassium channel toxin Meg-beta-KTx1.